A 313-amino-acid polypeptide reads, in one-letter code: Ribosomal RNA small subunit methyltransferase H (313 aa).

S-adenosyl-L-methionine-binding positions include 35–37, Asp55, Phe81, Asp103, and Gln110; that span reads GGH.

Belongs to the methyltransferase superfamily. RsmH family.

It is found in the cytoplasm. The catalysed reaction is cytidine(1402) in 16S rRNA + S-adenosyl-L-methionine = N(4)-methylcytidine(1402) in 16S rRNA + S-adenosyl-L-homocysteine + H(+). Specifically methylates the N4 position of cytidine in position 1402 (C1402) of 16S rRNA. This Azotobacter vinelandii (strain DJ / ATCC BAA-1303) protein is Ribosomal RNA small subunit methyltransferase H.